We begin with the raw amino-acid sequence, 62 residues long: Sperm histone P2a (62 aa).

Belongs to the protamine P2 family. In terms of processing, proteolytic processing into mature chains is required for histone eviction during spermatogenesis. Transition proteins (TNP1 and TNP2) are required for processing. Testis.

It localises to the nucleus. The protein resides in the chromosome. Functionally, protamines substitute for histones in the chromatin of sperm during the haploid phase of spermatogenesis. They compact sperm DNA into a highly condensed, stable and inactive complex. In Equus caballus (Horse), this protein is Sperm histone P2a.